A 327-amino-acid polypeptide reads, in one-letter code: Ribonucleoside-diphosphate reductase small chain (327 aa).

Residues aspartate 70, glutamate 101, and histidine 104 each contribute to the Fe cation site. The active site involves tyrosine 108. Residues glutamate 164, glutamate 198, and histidine 201 each coordinate Fe cation.

The protein belongs to the ribonucleoside diphosphate reductase small chain family. In terms of assembly, heterotetramer composed of a homodimer of the large subunit (R1) and a homodimer of the small subunit (R2). Larger multisubunit protein complex are also active, composed of (R1)n(R2)n. It depends on Fe cation as a cofactor.

It catalyses the reaction a 2'-deoxyribonucleoside 5'-diphosphate + [thioredoxin]-disulfide + H2O = a ribonucleoside 5'-diphosphate + [thioredoxin]-dithiol. Functionally, ribonucleoside-diphosphate reductase holoenzyme provides the precursors necessary for viral DNA synthesis. Allows virus growth in non-dividing cells. Catalyzes the biosynthesis of deoxyribonucleotides from the corresponding ribonucleotides. This African swine fever virus (isolate Tick/Malawi/Lil 20-1/1983) (ASFV) protein is Ribonucleoside-diphosphate reductase small chain.